Consider the following 458-residue polypeptide: MHKRTAVVLAAGKGTRMKSRQPKVLHEVAGQPMICHVLDALTDCGVAQPIVVIGHGGEAVRQRLGDRACYAWQQEQLGTGHAVMMARPEVPEEVETVMVLCGDTPLLTGATLSALWETHEQSGAMGTVLTAVIDDPKGYGRILRDDAGHVTAIVEEKDADEKQKTIREINAGTYCFDRAALFAALDAITPANAQGEYYLTDVLAIFRQRGGLVVAHTLQDEREILGINSRVQLAEAEAVLQDRLRRKWMDAGVTLIDPPSVFFHTKAVVGADTIIYPQTIIEGETVIGEGCRIGPATRICDSRIGENVVIQNSVVLDSRIGDDCAVGPFAYLRPGTCLAEAVKVGDFVEIKKSVIGKGSKVPHLSYVGDATVGEDVNIGAGTITCNYDGKHKHVTAIEDGAFIGSNTNLVAPVTVGAHALIGAGSTITKDVPAGALAVERSRMKIKENFLGRKHKGSQ.

A pyrophosphorylase region spans residues 1-230 (MHKRTAVVLA…EREILGINSR (230 aa)). Residues 9 to 12 (LAAG), Lys23, Gln73, and 78 to 79 (GT) each bind UDP-N-acetyl-alpha-D-glucosamine. Residue Asp103 participates in Mg(2+) binding. Residues Gly140, Glu155, Asn170, and Asn228 each contribute to the UDP-N-acetyl-alpha-D-glucosamine site. Asn228 serves as a coordination point for Mg(2+). Residues 231-251 (VQLAEAEAVLQDRLRRKWMDA) form a linker region. The interval 252–458 (GVTLIDPPSV…FLGRKHKGSQ (207 aa)) is N-acetyltransferase. UDP-N-acetyl-alpha-D-glucosamine-binding residues include Arg333 and Lys351. The Proton acceptor role is filled by His363. UDP-N-acetyl-alpha-D-glucosamine-binding residues include Tyr366 and Asn377. Acetyl-CoA-binding positions include Ala380, 386–387 (NY), Ser405, Ala423, and Arg440.

The protein in the N-terminal section; belongs to the N-acetylglucosamine-1-phosphate uridyltransferase family. It in the C-terminal section; belongs to the transferase hexapeptide repeat family. In terms of assembly, homotrimer. Mg(2+) is required as a cofactor.

It is found in the cytoplasm. The enzyme catalyses alpha-D-glucosamine 1-phosphate + acetyl-CoA = N-acetyl-alpha-D-glucosamine 1-phosphate + CoA + H(+). It carries out the reaction N-acetyl-alpha-D-glucosamine 1-phosphate + UTP + H(+) = UDP-N-acetyl-alpha-D-glucosamine + diphosphate. It participates in nucleotide-sugar biosynthesis; UDP-N-acetyl-alpha-D-glucosamine biosynthesis; N-acetyl-alpha-D-glucosamine 1-phosphate from alpha-D-glucosamine 6-phosphate (route II): step 2/2. The protein operates within nucleotide-sugar biosynthesis; UDP-N-acetyl-alpha-D-glucosamine biosynthesis; UDP-N-acetyl-alpha-D-glucosamine from N-acetyl-alpha-D-glucosamine 1-phosphate: step 1/1. Its pathway is bacterial outer membrane biogenesis; LPS lipid A biosynthesis. Its function is as follows. Catalyzes the last two sequential reactions in the de novo biosynthetic pathway for UDP-N-acetylglucosamine (UDP-GlcNAc). The C-terminal domain catalyzes the transfer of acetyl group from acetyl coenzyme A to glucosamine-1-phosphate (GlcN-1-P) to produce N-acetylglucosamine-1-phosphate (GlcNAc-1-P), which is converted into UDP-GlcNAc by the transfer of uridine 5-monophosphate (from uridine 5-triphosphate), a reaction catalyzed by the N-terminal domain. The polypeptide is Bifunctional protein GlmU (Heliobacterium modesticaldum (strain ATCC 51547 / Ice1)).